Here is a 406-residue protein sequence, read N- to C-terminus: Propionate kinase (406 aa).

Residues asparagine 11 and lysine 18 each coordinate ATP. Residue asparagine 11 coordinates Mg(2+). Arginine 86 contacts substrate. Aspartate 143 functions as the Proton donor/acceptor in the catalytic mechanism. Residues histidine 175, 203–207, 278–280, and 326–330 contribute to the ATP site; these read HLGNG, DMR, and GIGEN.

It belongs to the acetokinase family. TdcD subfamily. As to quaternary structure, homodimer. Mg(2+) serves as cofactor.

It carries out the reaction propanoate + ATP = propanoyl phosphate + ADP. It functions in the pathway amino-acid degradation; L-threonine degradation via propanoate pathway; propanoate from L-threonine: step 4/4. Functionally, catalyzes the conversion of propionyl phosphate and ADP to propionate and ATP. The chain is Propionate kinase from Yersinia enterocolitica serotype O:8 / biotype 1B (strain NCTC 13174 / 8081).